A 334-amino-acid chain; its full sequence is Transcription factor MYB92 (334 aa).

HTH myb-type domains lie at 9-61 (DSGL…TNYL) and 62-116 (RPDI…KKKL). 2 consecutive DNA-binding regions (H-T-H motif) follow at residues 37 to 61 (WRAL…TNYL) and 89 to 112 (WSTI…NTHL).

As to quaternary structure, interacts with FBX5. As to expression, highly expressed in roots and at lower levels in stems, flowers and siliques.

The protein resides in the nucleus. Probable transcription factor. This Arabidopsis thaliana (Mouse-ear cress) protein is Transcription factor MYB92.